The sequence spans 62 residues: Large ribosomal subunit protein bL33 (62 aa).

This sequence belongs to the bacterial ribosomal protein bL33 family.

This Acaryochloris marina (strain MBIC 11017) protein is Large ribosomal subunit protein bL33.